The chain runs to 373 residues: 4-hydroxy-3-methylbut-2-en-1-yl diphosphate synthase (flavodoxin) (373 aa).

4 residues coordinate [4Fe-4S] cluster: cysteine 270, cysteine 273, cysteine 305, and glutamate 312.

It belongs to the IspG family. It depends on [4Fe-4S] cluster as a cofactor.

It carries out the reaction (2E)-4-hydroxy-3-methylbut-2-enyl diphosphate + oxidized [flavodoxin] + H2O + 2 H(+) = 2-C-methyl-D-erythritol 2,4-cyclic diphosphate + reduced [flavodoxin]. The protein operates within isoprenoid biosynthesis; isopentenyl diphosphate biosynthesis via DXP pathway; isopentenyl diphosphate from 1-deoxy-D-xylulose 5-phosphate: step 5/6. Functionally, converts 2C-methyl-D-erythritol 2,4-cyclodiphosphate (ME-2,4cPP) into 1-hydroxy-2-methyl-2-(E)-butenyl 4-diphosphate. The sequence is that of 4-hydroxy-3-methylbut-2-en-1-yl diphosphate synthase (flavodoxin) from Erwinia tasmaniensis (strain DSM 17950 / CFBP 7177 / CIP 109463 / NCPPB 4357 / Et1/99).